Reading from the N-terminus, the 466-residue chain is MDNENNKNTKNSQQDSSFSEGGIRELLDRLALRSLIEKEEAAAPPKTYEDFKFWKTQPVPKFDDECTQEGPIDPNTDINQVPREPYRLLKEFEWATIDVTNDNELSEVHELLTENYVEDATAMLRFAYISEFLRWALMPPGYVKEWHVGVRVKSSRKLVAFISAVPLSIRVRDKIIKKCAEVNFLCIHKKLRSKRLTPLLIKEVTRRCHLENVWQAVYTAGVLLPSPVSLSRYMHRSLNWKKLYDIGFAPFPLGSTEKKETAKYHLPPNTQTPGLRPMELKDVPAVQSLLSQYMERFELAHLFSEEEVRHWFLYTDKVSSGPVVWSYVVENPESKKITDFFSFYSLPSTVIGNPKYKDIQAAYLYYYASDSCPKDLSSESQLAFVERCKLIVNDALILAKKFHFDVFNAVTVLDNNLFLKDLKFGEGDGFLNYYIYNYNCPKIPGGIDASKSVDYSRPSGMGFVMI.

The segment at 1 to 21 (MDNENNKNTKNSQQDSSFSEG) is disordered. The span at 8-19 (NTKNSQQDSSFS) shows a compositional bias: polar residues. The residue at position 17 (S17) is a Phosphoserine. Residues 51 to 54 (FKFW), 185 to 187 (LCI), and 193 to 197 (SKRLT) each bind tetradecanoyl-CoA. The active-site Proton acceptor; via carboxylate is the I466.

This sequence belongs to the NMT family. In terms of assembly, monomer.

It is found in the cytoplasm. It carries out the reaction N-terminal glycyl-[protein] + tetradecanoyl-CoA = N-tetradecanoylglycyl-[protein] + CoA + H(+). Adds a myristoyl group to the N-terminal glycine residue of certain cellular proteins. The polypeptide is Glycylpeptide N-tetradecanoyltransferase (nmt1) (Schizosaccharomyces pombe (strain 972 / ATCC 24843) (Fission yeast)).